A 171-amino-acid chain; its full sequence is S-ribosylhomocysteine lyase (171 aa).

Fe cation is bound by residues His54, His58, and Cys128.

It belongs to the LuxS family. As to quaternary structure, homodimer. Fe cation is required as a cofactor.

The enzyme catalyses S-(5-deoxy-D-ribos-5-yl)-L-homocysteine = (S)-4,5-dihydroxypentane-2,3-dione + L-homocysteine. Its function is as follows. Involved in the synthesis of autoinducer 2 (AI-2) which is secreted by bacteria and is used to communicate both the cell density and the metabolic potential of the environment. The regulation of gene expression in response to changes in cell density is called quorum sensing. Catalyzes the transformation of S-ribosylhomocysteine (RHC) to homocysteine (HC) and 4,5-dihydroxy-2,3-pentadione (DPD). This is S-ribosylhomocysteine lyase from Campylobacter concisus (strain 13826).